The following is a 381-amino-acid chain: Arginine biosynthesis bifunctional protein ArgJ (381 aa).

Substrate-binding residues include T143, K165, T176, E255, N376, and T381. T176 serves as the catalytic Nucleophile.

This sequence belongs to the ArgJ family. Heterotetramer of two alpha and two beta chains.

It localises to the cytoplasm. The enzyme catalyses N(2)-acetyl-L-ornithine + L-glutamate = N-acetyl-L-glutamate + L-ornithine. The catalysed reaction is L-glutamate + acetyl-CoA = N-acetyl-L-glutamate + CoA + H(+). The protein operates within amino-acid biosynthesis; L-arginine biosynthesis; L-ornithine and N-acetyl-L-glutamate from L-glutamate and N(2)-acetyl-L-ornithine (cyclic): step 1/1. It functions in the pathway amino-acid biosynthesis; L-arginine biosynthesis; N(2)-acetyl-L-ornithine from L-glutamate: step 1/4. In terms of biological role, catalyzes two activities which are involved in the cyclic version of arginine biosynthesis: the synthesis of N-acetylglutamate from glutamate and acetyl-CoA as the acetyl donor, and of ornithine by transacetylation between N(2)-acetylornithine and glutamate. The protein is Arginine biosynthesis bifunctional protein ArgJ of Thermus thermophilus (strain ATCC BAA-163 / DSM 7039 / HB27).